The following is a 228-amino-acid chain: Prophenin-2 (228 aa).

Residues 1 to 29 (METQRASLCLGRWSLWLLLLALVVPSASA) form the signal peptide. A propeptide spanning residues 30–146 (QALSYREAVL…FLRRPRLRRQ (117 aa)) is cleaved from the precursor. 2 disulfide bridges follow: C85–C96 and C107–C124. 7 tandem repeats follow at residues 148-157 (FPPPNVPGPR), 158-167 (FPPPNVPGPR), 168-177 (FPPPNFPGPR), 178-187 (FPPPNFPGPR), 188-197 (FPPPNFPGPP), 198-207 (FPPPIFPGPW), and 208-217 (FPPPPPFRPP). Residues 148–217 (FPPPNVPGPR…FPPPPPFRPP (70 aa)) are 7 X 10 AA tandem repeats. 2 disordered regions span residues 167–195 (RFPPPNFPGPRFPPPNFPGPRFPPPNFPG) and 207–228 (WFPPPPPFRPPPFGPPRFPGRR). P225 bears the Proline amide mark. Residues 226–228 (GRR) constitute a propeptide, removed in mature form.

Belongs to the cathelicidin family.

Its subcellular location is the secreted. In terms of biological role, exerts antimicrobial activity. It is more effective against Gram-negative bacteria than Gram-positive bacteria. The polypeptide is Prophenin-2 (Sus scrofa (Pig)).